The following is a 57-amino-acid chain: Delta-elapitoxin-Cb1a (57 aa).

Cystine bridges form between C3–C22, C15–C36, C40–C49, and C50–C55.

This sequence belongs to the three-finger toxin family. Short-chain subfamily. Expressed by the venom gland.

It is found in the secreted. This toxin shifts the voltage-dependence of Nav1.4/SCN4A activation to more hyperpolarised potentials, inhibits inactivation, and produces large ramp currents, consistent with its profound effects on contractile force in an isolated skeletal muscle preparation. This toxin produces large muscle contractions and fasciculations in the indirectly stimulated chick biventer cervicis nerve-muscle assay, which are significantly inhibited by the addition of the sodium channel antagonist tetrodotoxin. This chain is Delta-elapitoxin-Cb1a, found in Calliophis bivirgatus (Blue Malaysian coral snake).